A 207-amino-acid polypeptide reads, in one-letter code: Holliday junction branch migration complex subunit RuvA (207 aa).

The domain I stretch occupies residues 1–68 (MIGYLQGSLA…EDQWLLFGFL (68 aa)). The domain II stretch occupies residues 69–147 (QMAERDLFRQ…EWREEAGLLP (79 aa)). The flexible linker stretch occupies residues 148–158 (SATAAPIAAVQ). The domain III stretch occupies residues 158 to 207 (QEDVEMTLLALGYNNREILQALTAIAQENLVQSGQPAEDWIREAIAWLSR).

This sequence belongs to the RuvA family. As to quaternary structure, homotetramer. Forms an RuvA(8)-RuvB(12)-Holliday junction (HJ) complex. HJ DNA is sandwiched between 2 RuvA tetramers; dsDNA enters through RuvA and exits via RuvB. An RuvB hexamer assembles on each DNA strand where it exits the tetramer. Each RuvB hexamer is contacted by two RuvA subunits (via domain III) on 2 adjacent RuvB subunits; this complex drives branch migration. In the full resolvosome a probable DNA-RuvA(4)-RuvB(12)-RuvC(2) complex forms which resolves the HJ.

The protein localises to the cytoplasm. Its function is as follows. The RuvA-RuvB-RuvC complex processes Holliday junction (HJ) DNA during genetic recombination and DNA repair, while the RuvA-RuvB complex plays an important role in the rescue of blocked DNA replication forks via replication fork reversal (RFR). RuvA specifically binds to HJ cruciform DNA, conferring on it an open structure. The RuvB hexamer acts as an ATP-dependent pump, pulling dsDNA into and through the RuvAB complex. HJ branch migration allows RuvC to scan DNA until it finds its consensus sequence, where it cleaves and resolves the cruciform DNA. This Synechococcus elongatus (strain ATCC 33912 / PCC 7942 / FACHB-805) (Anacystis nidulans R2) protein is Holliday junction branch migration complex subunit RuvA.